A 208-amino-acid chain; its full sequence is Thymidylate kinase (208 aa).

7–14 (GIDGSGKS) lines the ATP pocket.

This sequence belongs to the thymidylate kinase family.

The catalysed reaction is dTMP + ATP = dTDP + ADP. Its function is as follows. Phosphorylation of dTMP to form dTDP in both de novo and salvage pathways of dTTP synthesis. The chain is Thymidylate kinase from Kosmotoga olearia (strain ATCC BAA-1733 / DSM 21960 / TBF 19.5.1).